We begin with the raw amino-acid sequence, 337 residues long: Ribosomal RNA small subunit methyltransferase H (337 aa).

S-adenosyl-L-methionine-binding positions include G45–H47, D64, H91, D112, and Q119.

Belongs to the methyltransferase superfamily. RsmH family.

The protein resides in the cytoplasm. The catalysed reaction is cytidine(1402) in 16S rRNA + S-adenosyl-L-methionine = N(4)-methylcytidine(1402) in 16S rRNA + S-adenosyl-L-homocysteine + H(+). Its function is as follows. Specifically methylates the N4 position of cytidine in position 1402 (C1402) of 16S rRNA. The sequence is that of Ribosomal RNA small subunit methyltransferase H from Cutibacterium acnes (strain DSM 16379 / KPA171202) (Propionibacterium acnes).